Consider the following 152-residue polypeptide: Phospholipase A2 pkP2 (152 aa).

Residues 1-21 (MNPAHLLVLLAVCVSLLGASA) form the signal peptide. Residues 22-27 (IPPLPL) constitute a propeptide that is removed on maturation. Cystine bridges form between cysteine 38/cysteine 104, cysteine 54/cysteine 151, cysteine 56/cysteine 72, cysteine 71/cysteine 132, cysteine 78/cysteine 125, cysteine 88/cysteine 118, and cysteine 111/cysteine 123. Residues tyrosine 55, glycine 57, and glycine 59 each coordinate Ca(2+). Histidine 75 is an active-site residue. Position 76 (aspartate 76) interacts with Ca(2+). Aspartate 126 is an active-site residue.

Belongs to the phospholipase A2 family. Group I subfamily. Ca(2+) is required as a cofactor.

It localises to the secreted. It catalyses the reaction a 1,2-diacyl-sn-glycero-3-phosphocholine + H2O = a 1-acyl-sn-glycero-3-phosphocholine + a fatty acid + H(+). Functionally, PA2 catalyzes the calcium-dependent hydrolysis of the 2-acyl groups in 3-sn-phosphoglycerides. The polypeptide is Phospholipase A2 pkP2 (Laticauda semifasciata (Black-banded sea krait)).